The sequence spans 142 residues: uncharacterized protein (142 aa).

The signal sequence occupies residues 1-20; sequence MPSVNEFFIFFLIVWHTCEC. N-linked (GlcNAc...) asparagine glycosylation is present at N80.

This is an uncharacterized protein from Dictyostelium discoideum (Social amoeba).